The primary structure comprises 495 residues: Surface E' protein (495 aa).

The chain crosses the membrane as a helical span at residues 224-235 (GTLIGLVALIGV).

The protein localises to the cell membrane. This is Surface E' protein (cbbE') from Coxiella burnetii.